The following is a 201-amino-acid chain: Phosphoprotein (201 aa).

2 disordered regions span residues Met-1–Ser-70 and Pro-176–Pro-201. Short sequence motifs (nuclear localization signal) lie at residues Pro-29–Arg-36 and Pro-181–Thr-193.

Homomultimer; only active in its oligomeric state. Interacts with nucleoprotein/N. Interacts with matrix/M protein. Interacts with host TBK1. Interacts with polymerase L. Interacts with host HMGB1; this interaction is required to stabilize RNP on chromosomes. Post-translationally, phosphorylated by host PKC epsilon and casein kinase II.

It localises to the host nucleus. The protein resides in the host cytoplasm. In terms of biological role, essential component of the RNA polymerase transcription and replication complex. Acts as a scaffold which brings L in close proximity to the N-RNA complex. Plays a role in the segregation of the viral genome in host daughter cells during mitosis by interacting with host HMGB1, a host chromatin-remodeling DNA architectural protein, thereby stabilizing RNP on chromosomes. Interacts with host TBK1 and thus interferes with activation of cellular antiviral state. Inhibits cellular histone acetyltransferase activities. This Bos taurus (Bovine) protein is Phosphoprotein (P/X).